The chain runs to 131 residues: Profilin (131 aa).

This sequence belongs to the profilin family. As to quaternary structure, occurs in many kinds of cells as a complex with monomeric actin in a 1:1 ratio.

Its subcellular location is the cytoplasm. The protein localises to the cytoskeleton. Binds to actin and affects the structure of the cytoskeleton. At high concentrations, profilin prevents the polymerization of actin, whereas it enhances it at low concentrations. By binding to PIP2, it inhibits the formation of IP3 and DG. This is Profilin from Prunus dulcis (Almond).